The primary structure comprises 147 residues: Large ribosomal subunit protein uL15 (147 aa).

Residues 1–42 are disordered; sequence MTIKLHHLRPAPGAKTDKTRVGRGEGSKGKTAGRGTKGTKAR. The segment covering 15 to 28 has biased composition (basic and acidic residues); the sequence is KTDKTRVGRGEGSK.

The protein belongs to the universal ribosomal protein uL15 family. As to quaternary structure, part of the 50S ribosomal subunit.

Functionally, binds to the 23S rRNA. The chain is Large ribosomal subunit protein uL15 from Nocardia farcinica (strain IFM 10152).